The sequence spans 430 residues: Phosphomethylpyrimidine synthase (430 aa).

Residues N67, M96, Y125, H161, S183–G185, D224–R227, and E263 contribute to the substrate site. H267 lines the Zn(2+) pocket. Y290 serves as a coordination point for substrate. H331 provides a ligand contact to Zn(2+). Positions 406, 409, and 413 each coordinate [4Fe-4S] cluster.

The protein belongs to the ThiC family. As to quaternary structure, homodimer. [4Fe-4S] cluster is required as a cofactor.

The enzyme catalyses 5-amino-1-(5-phospho-beta-D-ribosyl)imidazole + S-adenosyl-L-methionine = 4-amino-2-methyl-5-(phosphooxymethyl)pyrimidine + CO + 5'-deoxyadenosine + formate + L-methionine + 3 H(+). It participates in cofactor biosynthesis; thiamine diphosphate biosynthesis. Its function is as follows. Catalyzes the synthesis of the hydroxymethylpyrimidine phosphate (HMP-P) moiety of thiamine from aminoimidazole ribotide (AIR) in a radical S-adenosyl-L-methionine (SAM)-dependent reaction. The polypeptide is Phosphomethylpyrimidine synthase (Campylobacter jejuni subsp. jejuni serotype O:2 (strain ATCC 700819 / NCTC 11168)).